The primary structure comprises 111 residues: Dynein light chain Tctex-type (111 aa).

It belongs to the dynein light chain Tctex-type family. The cytoplasmic dynein complex consists of two catalytic heavy chains (HCs) and a number of non-catalytic subunits presented by intermediate chains (ICs), light intermediate chains (LICs) and light chains (LCs).

Its subcellular location is the cytoplasm. It is found in the cytoskeleton. Functionally, acts as one of several non-catalytic accessory components of the cytoplasmic dynein complex that are thought to be involved in linking dynein to cargos and to adapter proteins that regulate dynein function. Cytoplasmic dynein acts as a motor for the intracellular retrograde motility of vesicles and organelles along microtubules. Required for spermatid differentiation. Is not required for polarized transport in rhabdomere development and appears to be a non-essential component of the cytoplasmic dynein complex. This chain is Dynein light chain Tctex-type (Dlc90F), found in Drosophila melanogaster (Fruit fly).